Here is a 133-residue protein sequence, read N- to C-terminus: Small ribosomal subunit protein uS11 (133 aa).

Belongs to the universal ribosomal protein uS11 family. As to quaternary structure, part of the 30S ribosomal subunit.

In terms of biological role, located on the platform of the 30S subunit. The polypeptide is Small ribosomal subunit protein uS11 (Hyperthermus butylicus (strain DSM 5456 / JCM 9403 / PLM1-5)).